The following is a 137-amino-acid chain: 2-iminobutanoate/2-iminopropanoate deaminase (137 aa).

At Ser2 the chain carries N-acetylserine. 2 positions are modified to N6-succinyllysine: Lys13 and Lys67. Thr74 is subject to Phosphothreonine. At Ser136 the chain carries Phosphoserine.

Homotrimer. Interacts with YTHDF2. In terms of tissue distribution, expressed by various malignant neoplasms.

The protein resides in the cytoplasm. Its subcellular location is the nucleus. It is found in the peroxisome. It localises to the mitochondrion. It carries out the reaction 2-iminobutanoate + H2O = 2-oxobutanoate + NH4(+). The catalysed reaction is 2-iminopropanoate + H2O = pyruvate + NH4(+). In terms of biological role, catalyzes the hydrolytic deamination of enamine/imine intermediates that form during the course of normal metabolism. May facilitate the release of ammonia from these potentially toxic reactive metabolites, reducing their impact on cellular components. It may act on enamine/imine intermediates formed by several types of pyridoxal-5'-phosphate-dependent dehydratases including L-threonine dehydratase. Its function is as follows. Also promotes endoribonucleolytic cleavage of some transcripts by promoting recruitment of the ribonuclease P/MRP complex. Acts by bridging YTHDF2 and the ribonuclease P/MRP complex. RIDA/HRSP12 binds to N6-methyladenosine (m6A)-containing mRNAs containing a 5'-GGUUC-3' motif: cooperative binding of RIDA/HRSP12 and YTHDF2 to such transcripts lead to recruitment of the ribonuclease P/MRP complex and subsequent endoribonucleolytic cleavage. The chain is 2-iminobutanoate/2-iminopropanoate deaminase from Capra hircus (Goat).